A 365-amino-acid polypeptide reads, in one-letter code: MSCFGCCGEDDDMHKTADYGGRHNQAKHFPPGNDARHHQASETAQKGPPVVKLQPIEVPIIPFSELKEATDDFGSNSLIGEGSYGRVYYGVLNNDLPSAIKKLDSNKQPDNEFLAQVSMVSRLKHDNFVQLLGYCVDGNSRILSYEFANNGSLHDILHGRKGVKGAQPGPVLSWYQRVKIAVGAARGLEYLHEKANPHIIHRDIKSSNVLLFEDDVAKIADFDLSNQAPDMAARLHSTRVLGTFGYHAPEYAMTGQLNAKSDVYSFGVVLLELLTGRKPVDHRLPRGQQSLVTWATPKLSEDKVKQCVDARLGGDYPPKAVAKLAAVAALCVQYEADFRPNMSIVVKALQPLLNARAVAPGEGVH.

The tract at residues Asp18 to Pro48 is disordered. The region spanning Phe73–Leu353 is the Protein kinase domain. ATP-binding positions include Ile79–Val87 and Lys101. Phosphotyrosine is present on Tyr145. The Proton acceptor role is filled by Asp203. 2 positions are modified to phosphoserine: Ser207 and Ser237. 2 positions are modified to phosphothreonine: Thr238 and Thr243. The residue at position 251 (Tyr251) is a Phosphotyrosine.

The protein belongs to the protein kinase superfamily. Ser/Thr protein kinase family.

It carries out the reaction L-seryl-[protein] + ATP = O-phospho-L-seryl-[protein] + ADP + H(+). The enzyme catalyses L-threonyl-[protein] + ATP = O-phospho-L-threonyl-[protein] + ADP + H(+). This chain is Probable receptor-like protein kinase At2g47060, found in Arabidopsis thaliana (Mouse-ear cress).